Reading from the N-terminus, the 192-residue chain is tRNA (pseudouridine(54)-N(1))-methyltransferase (192 aa).

S-adenosyl-L-methionine is bound by residues L127 and C181.

It belongs to the methyltransferase superfamily. TrmY family. In terms of assembly, homodimer.

It is found in the cytoplasm. The enzyme catalyses pseudouridine(54) in tRNA + S-adenosyl-L-methionine = N(1)-methylpseudouridine(54) in tRNA + S-adenosyl-L-homocysteine + H(+). In terms of biological role, specifically catalyzes the N1-methylation of pseudouridine at position 54 (Psi54) in tRNAs. The sequence is that of tRNA (pseudouridine(54)-N(1))-methyltransferase from Methanocella arvoryzae (strain DSM 22066 / NBRC 105507 / MRE50).